The following is a 253-amino-acid chain: tRNA pseudouridine synthase A (253 aa).

The active-site Nucleophile is D53. Y112 lines the substrate pocket.

This sequence belongs to the tRNA pseudouridine synthase TruA family. As to quaternary structure, homodimer.

The catalysed reaction is uridine(38/39/40) in tRNA = pseudouridine(38/39/40) in tRNA. Functionally, formation of pseudouridine at positions 38, 39 and 40 in the anticodon stem and loop of transfer RNAs. The protein is tRNA pseudouridine synthase A of Lactococcus lactis subsp. cremoris (strain SK11).